The following is a 165-amino-acid chain: Large ribosomal subunit protein uL5 (165 aa).

This sequence belongs to the universal ribosomal protein uL5 family. As to quaternary structure, part of the 50S ribosomal subunit; contacts the 5S rRNA and probably tRNA. Forms a bridge to the 30S subunit in the 70S ribosome.

In terms of biological role, this is one of the proteins that bind and probably mediate the attachment of the 5S RNA into the large ribosomal subunit, where it forms part of the central protuberance. In the 70S ribosome it contacts protein S13 of the 30S subunit (bridge B1b), connecting the 2 subunits; this bridge is implicated in subunit movement. May contact the P site tRNA; the 5S rRNA and some of its associated proteins might help stabilize positioning of ribosome-bound tRNAs. This Methanosarcina acetivorans (strain ATCC 35395 / DSM 2834 / JCM 12185 / C2A) protein is Large ribosomal subunit protein uL5.